The chain runs to 389 residues: NAD-dependent protein deacetylase sirtuin-2 (389 aa).

Residues 1–34 form a disordered region; sequence MAEPDPSHPLETQAGKVQEAQDSDSDSEGGAAGG. An N-acetylalanine modification is found at A2. Residues S23, S25, S27, and S53 each carry the phosphoserine modification. The 282-residue stretch at 57–338 folds into the Deacetylase sirtuin-type domain; the sequence is RLLDELTLEG…LALAELLGWK (282 aa). Residues 85–89 and 95–97 each bind NAD(+); these read AGIST and DFR. A Phosphoserine modification is found at S100. 167–170 is an NAD(+) binding site; sequence QNID. The Proton acceptor role is filled by H187. C195 and C200 together coordinate Zn(2+). A Phosphoserine modification is found at S207. Zn(2+) contacts are provided by C221 and C224. Residues 262 to 263, 286 to 288, and C324 contribute to the NAD(+) site; these read TS and NKE. Positions 350–389 are disordered; sequence ASIDAQSGAEAPNPSTSASPRKSPPPAQDEARTTEREKPQ. Phosphoserine occurs at positions 368 and 372. Residues 378 to 389 are compositionally biased toward basic and acidic residues; the sequence is DEARTTEREKPQ.

This sequence belongs to the sirtuin family. Class I subfamily. In terms of assembly, interacts with CDC20, FOXO3 and FZR1. Associates with microtubules in primary cortical mature neurons. Homotrimer. Interacts (via both phosphorylated, unphosphorylated, active or inactive forms) with HDAC6; the interaction is necessary for the complex to interact with alpha-tubulin, suggesting that these proteins belong to a large complex that deacetylates the cytoskeleton. Interacts with FOXO1; the interaction is disrupted upon serum-starvation or oxidative stress, leading to increased level of acetylated FOXO1 and induction of autophagy. Interacts with RELA; the interaction occurs in the cytoplasm and is increased in a TNF-alpha-dependent manner. Interacts with HOXA10; the interaction is direct. Interacts with YWHAB and YWHAG; the interactions occur in a AKT-dependent manner and increase SIRT2-dependent TP53 deacetylation. Interacts with MAPK1/ERK2 and MAPK3/ERK1; the interactions increase SIRT2 stability and deacetylation activity. Interacts (phosphorylated form) with KMT5A isoform 2; the interaction is direct, stimulates KMT5A-mediated methyltransferase activity on histone at 'Lys-20' (H4K20me1) and is increased in a H(2)O(2)-induced oxidative stress-dependent manner. Interacts with G6PD; the interaction is enhanced by H(2)O(2) treatment. Interacts with a G1/S-specific cyclin E-CDK2 complex. Interacts with AURKA, CDK5R1 (p35 form) and CDK5 and HIF1A. Interacts with the tRNA ligase SARS1; recruited to the VEGFA promoter via interaction with SARS1. Interacts with BEX4; negatively regulates alpha-tubulin deacetylation by SIRT2. The cofactor is Zn(2+). Post-translationally, phosphorylated at phosphoserine and phosphothreonine. Phosphorylated at Ser-368 by a mitotic kinase CDK1/cyclin B at the G2/M transition; phosphorylation regulates the delay in cell-cycle progression. Phosphorylated at Ser-368 by a mitotic kinase G1/S-specific cyclin E/Cdk2 complex; phosphorylation inactivates SIRT2-mediated alpha-tubulin deacetylation and thereby negatively regulates cell adhesion, cell migration and neurite outgrowth during neuronal differentiation. Phosphorylated by cyclin A/Cdk2 and p35-Cdk5 complexes and to a lesser extent by the cyclin D3/Cdk4 and cyclin B/Cdk1, in vitro. Dephosphorylated at Ser-368 by CDC14A and CDC14B around early anaphase. In terms of processing, acetylated by EP300; acetylation leads both to the decreased of SIRT2-mediated alpha-tubulin deacetylase activity and SIRT2-mediated down-regulation of TP53 transcriptional activity. Ubiquitinated.

Its subcellular location is the nucleus. The protein resides in the cytoplasm. It is found in the perinuclear region. The protein localises to the cytoskeleton. It localises to the microtubule organizing center. Its subcellular location is the centrosome. The protein resides in the centriole. It is found in the spindle. The protein localises to the midbody. It localises to the chromosome. Its subcellular location is the perikaryon. The protein resides in the cell projection. It is found in the growth cone. The protein localises to the myelin membrane. The catalysed reaction is N(6)-acetyl-L-lysyl-[protein] + NAD(+) + H2O = 2''-O-acetyl-ADP-D-ribose + nicotinamide + L-lysyl-[protein]. It carries out the reaction N(6)-tetradecanoyl-L-lysyl-[protein] + NAD(+) + H2O = 2''-O-tetradecanoyl-ADP-D-ribose + nicotinamide + L-lysyl-[protein]. The enzyme catalyses N(6)-hexadecanoyl-L-lysyl-[protein] + NAD(+) + H2O = 2''-O-hexadecanoyl-ADP-D-ribose + nicotinamide + L-lysyl-[protein]. Inhibited by Sirtinol, A3 and M15 small molecules. Inhibited by nicotinamide. NAD-dependent protein deacetylase, which deacetylates internal lysines on histone and alpha-tubulin as well as many other proteins such as key transcription factors. Participates in the modulation of multiple and diverse biological processes such as cell cycle control, genomic integrity, microtubule dynamics, cell differentiation, metabolic networks, and autophagy. Plays a major role in the control of cell cycle progression and genomic stability. Functions in the antephase checkpoint preventing precocious mitotic entry in response to microtubule stress agents, and hence allowing proper inheritance of chromosomes. Positively regulates the anaphase promoting complex/cyclosome (APC/C) ubiquitin ligase complex activity by deacetylating CDC20 and FZR1, then allowing progression through mitosis. Associates both with chromatin at transcriptional start sites (TSSs) and enhancers of active genes. Plays a role in cell cycle and chromatin compaction through epigenetic modulation of the regulation of histone H4 'Lys-20' methylation (H4K20me1) during early mitosis. Specifically deacetylates histone H4 at 'Lys-16' (H4K16ac) between the G2/M transition and metaphase enabling H4K20me1 deposition by KMT5A leading to ulterior levels of H4K20me2 and H4K20me3 deposition throughout cell cycle, and mitotic S-phase progression. Deacetylates KMT5A modulating KMT5A chromatin localization during the mitotic stress response. Also deacetylates histone H3 at 'Lys-57' (H3K56ac) during the mitotic G2/M transition. During oocyte meiosis progression, may deacetylate histone H4 at 'Lys-16' (H4K16ac) and alpha-tubulin, regulating spindle assembly and chromosome alignment by influencing microtubule dynamics and kinetochore function. Deacetylates histone H4 at 'Lys-16' (H4K16ac) at the VEGFA promoter and thereby contributes to regulate expression of VEGFA, a key regulator of angiogenesis. Deacetylates alpha-tubulin at 'Lys-40' and hence controls neuronal motility, oligodendroglial cell arbor projection processes and proliferation of non-neuronal cells. Phosphorylation at Ser-368 by a G1/S-specific cyclin E-CDK2 complex inactivates SIRT2-mediated alpha-tubulin deacetylation, negatively regulating cell adhesion, cell migration and neurite outgrowth during neuronal differentiation. Deacetylates PARD3 and participates in the regulation of Schwann cell peripheral myelination formation during early postnatal development and during postinjury remyelination. Involved in several cellular metabolic pathways. Plays a role in the regulation of blood glucose homeostasis by deacetylating and stabilizing phosphoenolpyruvate carboxykinase PCK1 activity in response to low nutrient availability. Acts as a key regulator in the pentose phosphate pathway (PPP) by deacetylating and activating the glucose-6-phosphate G6PD enzyme, and therefore, stimulates the production of cytosolic NADPH to counteract oxidative damage. Maintains energy homeostasis in response to nutrient deprivation as well as energy expenditure by inhibiting adipogenesis and promoting lipolysis. Attenuates adipocyte differentiation by deacetylating and promoting FOXO1 interaction to PPARG and subsequent repression of PPARG-dependent transcriptional activity. Plays a role in the regulation of lysosome-mediated degradation of protein aggregates by autophagy in neuronal cells. Deacetylates FOXO1 in response to oxidative stress or serum deprivation, thereby negatively regulating FOXO1-mediated autophagy. Deacetylates a broad range of transcription factors and co-regulators regulating target gene expression. Deacetylates transcriptional factor FOXO3 stimulating the ubiquitin ligase SCF(SKP2)-mediated FOXO3 ubiquitination and degradation. Deacetylates HIF1A and therefore promotes HIF1A degradation and inhibition of HIF1A transcriptional activity in tumor cells in response to hypoxia. Deacetylates RELA in the cytoplasm inhibiting NF-kappaB-dependent transcription activation upon TNF-alpha stimulation. Inhibits transcriptional activation by deacetylating p53/TP53 and EP300. Also deacetylates EIF5A. Functions as a negative regulator on oxidative stress-tolerance in response to anoxia-reoxygenation conditions. Plays a role as tumor suppressor. In addition to protein deacetylase activity, also has activity toward long-chain fatty acyl groups and mediates protein-lysine demyristoylation and depalmitoylation of target proteins, such as ARF6 and KRAS, thereby regulating their association with membranes. This Macaca fascicularis (Crab-eating macaque) protein is NAD-dependent protein deacetylase sirtuin-2 (SIRT2).